We begin with the raw amino-acid sequence, 121 residues long: Large ribosomal subunit protein uL18 (121 aa).

The protein belongs to the universal ribosomal protein uL18 family. In terms of assembly, part of the 50S ribosomal subunit; part of the 5S rRNA/L5/L18/L25 subcomplex. Contacts the 5S and 23S rRNAs.

Functionally, this is one of the proteins that bind and probably mediate the attachment of the 5S RNA into the large ribosomal subunit, where it forms part of the central protuberance. The sequence is that of Large ribosomal subunit protein uL18 from Dehalococcoides mccartyi (strain ATCC BAA-2266 / KCTC 15142 / 195) (Dehalococcoides ethenogenes (strain 195)).